Consider the following 196-residue polypeptide: N-(5'-phosphoribosyl)anthranilate isomerase (196 aa).

The protein belongs to the TrpF family.

The enzyme catalyses N-(5-phospho-beta-D-ribosyl)anthranilate = 1-(2-carboxyphenylamino)-1-deoxy-D-ribulose 5-phosphate. It functions in the pathway amino-acid biosynthesis; L-tryptophan biosynthesis; L-tryptophan from chorismate: step 3/5. The polypeptide is N-(5'-phosphoribosyl)anthranilate isomerase (Nitratiruptor sp. (strain SB155-2)).